Consider the following 1112-residue polypeptide: cGMP-inhibited 3',5'-cyclic phosphodiesterase 3B (1112 aa).

A compositionally biased stretch (basic and acidic residues) spans 1 to 10 (MRRDERDAKA). The interval 1–25 (MRRDERDAKAMRSLQPPDGAGSPPE) is interaction with RAPGEF3. A disordered region spans residues 1–26 (MRRDERDAKAMRSLQPPDGAGSPPES). Ser13 carries the post-translational modification Phosphoserine. A run of 6 helical transmembrane segments spans residues 88-108 (FVLA…AAWL), 117-137 (HSLS…CFLT), 152-172 (WWLL…WQWW), 192-212 (AAAG…TLAH), 220-240 (VLVL…LGSL), and 247-267 (LLSG…DHFF). Ser295 bears the Phosphoserine; by PKB/AKT1 or PKB/AKT2 mark. A phosphoserine mark is found at Ser296 and Ser442. The segment at 418 to 471 (EKGDRKLNKGLNRNSLPTPQLRRSSGTSGLLPVEQSSRWDRNNGKRPHQEFGIS) is disordered. Residues 428–445 (LNRNSLPTPQLRRSSGTS) show a composition bias toward polar residues. The interaction with PIK3R6 stretch occupies residues 436–460 (PQLRRSSGTSGLLPVEQSSRWDRNN). Basic and acidic residues predominate over residues 454-466 (SRWDRNNGKRPHQ). One can recognise a PDEase domain in the interval 651 to 1079 (TNIEQEVSLD…KIWKEIVEEE (429 aa)). The active-site Proton donor is His737. An AMP-binding site is contributed by His737. The Mg(2+) site is built by His741, His821, Asp822, and Asp937. Positions 822, 937, and 988 each coordinate AMP. 2 stretches are compositionally biased toward acidic residues: residues 1017–1041 (EEDN…EEME) and 1103–1112 (QVIEEADEEE). Disordered stretches follow at residues 1017-1051 (EEDN…PPRR) and 1092-1112 (ENSS…DEEE).

It belongs to the cyclic nucleotide phosphodiesterase family. PDE3 subfamily. In terms of assembly, homodimer. Interacts with PIK3CG; regulates PDE3B activity and thereby cAMP levels in cells. Interacts with RAPGEF3 and PIK3R6; form a signaling complex that regulates phosphatidylinositol 3-kinase gamma in angiogenesis. Interacts with ABHD15; this interaction regulates PDE3B's stability and expression and, thereby, impacts the antilipolytic action of insulin. The cofactor is Mg(2+). Mn(2+) is required as a cofactor. In terms of processing, phosphorylation at Ser-295 mediates insulin-induced activation of PDE3B. As to expression, abundant in adipose tissues.

Its subcellular location is the membrane. The catalysed reaction is a nucleoside 3',5'-cyclic phosphate + H2O = a nucleoside 5'-phosphate + H(+). It catalyses the reaction 3',5'-cyclic AMP + H2O = AMP + H(+). It carries out the reaction 3',5'-cyclic GMP + H2O = GMP + H(+). Inhibited by cGMP. Cyclic nucleotide phosphodiesterase with a dual-specificity for the second messengers cAMP and cGMP, which are key regulators of many important physiological process. Regulates angiogenesis by inhibiting the cAMP-dependent guanine nucleotide exchange factor RAPGEF3 and downstream phosphatidylinositol 3-kinase gamma-mediated signaling. Controls cardiac contractility by reducing cAMP concentration in cardiocytes. This Homo sapiens (Human) protein is cGMP-inhibited 3',5'-cyclic phosphodiesterase 3B.